The chain runs to 435 residues: MNLASQSVDAGAGQLLFANFNQDNTSLAVGSKSGYKFFSLSSVDKLEQIYECTDTEDVCIVERLFSSSLVAIVSLKAPRKLKVCHFKKGTEICNYSYSNTTLAVKLNRQRLIVCLEESLYIHNIRDMKVLHTIRETPPNPSGLCSLSINGENCYLAYPGSASIGEVQVFDTVNLRAANMIPAHDSPLAALAFDASGTKLATASEKGTVIRVFSIPEGQKLFEFRRGVKRCVSICSLAFSMDSIFLSASSNTETVHIFKLETIKEKPPEEPTSWTGYFGRVIMASTSYLPSQVTEMFNQGRAFATVRLPFCGHKNICALATIQKISRLLVGAADGYLYIYNFDPQEGGECTLMKQHKLDGSMEPSSEILESSSHDRQVGAQTYSATVTKTYPPPSPTRHAYADDLGAVGGASEEDEMGNLRLDEDNENPPMILQTE.

A WD 1 repeat occupies 182 to 222 (AHDSPLAALAFDASGTKLATASEKGTVIRVFSIPEGQKLFE). A L/FRRG motif motif is present at residues 223 to 226 (FRRG). WD repeat units lie at residues 228-267 (KRCV…EKPP) and 311-349 (GHKN…GGEC). The disordered stretch occupies residues 386–435 (VTKTYPPPSPTRHAYADDLGAVGGASEEDEMGNLRLDEDNENPPMILQTE).

It belongs to the WD repeat PROPPIN family.

It is found in the preautophagosomal structure membrane. Functionally, component of the autophagy machinery that controls the major intracellular degradation process by which cytoplasmic materials are packaged into autophagosomes and delivered to lysosomes for degradation. Involved in an early step of the formation of preautophagosomal structures. This Xenopus laevis (African clawed frog) protein is WD repeat domain phosphoinositide-interacting protein 2 (wipi2).